Reading from the N-terminus, the 295-residue chain is Ethanolamine ammonia-lyase small subunit (295 aa).

Adenosylcob(III)alamin contacts are provided by Val-207, Glu-228, and Cys-258.

The protein belongs to the EutC family. In terms of assembly, the basic unit is a heterodimer which dimerizes to form tetramers. The heterotetramers trimerize; 6 large subunits form a core ring with 6 small subunits projecting outwards. Adenosylcob(III)alamin serves as cofactor.

It localises to the bacterial microcompartment. The enzyme catalyses ethanolamine = acetaldehyde + NH4(+). It participates in amine and polyamine degradation; ethanolamine degradation. Catalyzes the deamination of various vicinal amino-alcohols to oxo compounds. Allows this organism to utilize ethanolamine as the sole source of nitrogen and carbon in the presence of external vitamin B12. The polypeptide is Ethanolamine ammonia-lyase small subunit (Escherichia coli (strain SE11)).